The primary structure comprises 118 residues: UPF0342 protein BCE_0953 (118 aa).

This sequence belongs to the UPF0342 family.

The sequence is that of UPF0342 protein BCE_0953 from Bacillus cereus (strain ATCC 10987 / NRS 248).